Reading from the N-terminus, the 239-residue chain is Probable transcriptional regulatory protein BC_0539 (239 aa).

Belongs to the TACO1 family. YeeN subfamily.

The protein resides in the cytoplasm. The polypeptide is Probable transcriptional regulatory protein BC_0539 (Bacillus cereus (strain ATCC 14579 / DSM 31 / CCUG 7414 / JCM 2152 / NBRC 15305 / NCIMB 9373 / NCTC 2599 / NRRL B-3711)).